The chain runs to 148 residues: 3-dehydroquinate dehydratase (148 aa).

Residue Tyr24 is the Proton acceptor of the active site. The substrate site is built by Asn75, His81, and Asp88. The active-site Proton donor is His101. Substrate contacts are provided by residues 102–103 (LS) and Arg112.

The protein belongs to the type-II 3-dehydroquinase family. In terms of assembly, homododecamer.

It carries out the reaction 3-dehydroquinate = 3-dehydroshikimate + H2O. It functions in the pathway metabolic intermediate biosynthesis; chorismate biosynthesis; chorismate from D-erythrose 4-phosphate and phosphoenolpyruvate: step 3/7. Catalyzes a trans-dehydration via an enolate intermediate. The sequence is that of 3-dehydroquinate dehydratase from Rhizobium meliloti (strain 1021) (Ensifer meliloti).